The chain runs to 57 residues: Orphan toxin OrtT (57 aa).

The next 2 membrane-spanning stretches (helical) occupy residues 6–26 (HMLVFYAVMAAIAFLITWFLS) and 34–54 (FLSAFLVGATWPMSFPVALLF).

This sequence belongs to the GhoT/OrtT toxin family.

The protein localises to the cell inner membrane. In terms of biological role, acts as an orphan toxin which is important for maintaining cell fitness during stress related to the stringent response. Increases the formation of persister cells. Has no known antitoxin. The sequence is that of Orphan toxin OrtT from Escherichia coli O6:H1 (strain CFT073 / ATCC 700928 / UPEC).